The following is a 391-amino-acid chain: GTPase Obg (391 aa).

The Obg domain occupies 1 to 159 (MQFVDEATID…RRLRLELKVL (159 aa)). In terms of domain architecture, OBG-type G spans 160-333 (ADVGLLGMPN…LVYALMNAIE (174 aa)). GTP-binding positions include 166 to 173 (GMPNAGKS), 191 to 195 (FTTLI), 213 to 216 (DIPG), 283 to 286 (NKID), and 314 to 316 (SAA). Mg(2+)-binding residues include Ser173 and Thr193. The segment covering 367–377 (LKAEARQARQN) has biased composition (basic and acidic residues). The segment at 367 to 391 (LKAEARQARQNDDDDDHDVEVVYEP) is disordered. Positions 378–391 (DDDDDHDVEVVYEP) are enriched in acidic residues.

The protein belongs to the TRAFAC class OBG-HflX-like GTPase superfamily. OBG GTPase family. Monomer. Mg(2+) serves as cofactor.

The protein resides in the cytoplasm. Its function is as follows. An essential GTPase which binds GTP, GDP and possibly (p)ppGpp with moderate affinity, with high nucleotide exchange rates and a fairly low GTP hydrolysis rate. Plays a role in control of the cell cycle, stress response, ribosome biogenesis and in those bacteria that undergo differentiation, in morphogenesis control. The protein is GTPase Obg of Alcanivorax borkumensis (strain ATCC 700651 / DSM 11573 / NCIMB 13689 / SK2).